We begin with the raw amino-acid sequence, 142 residues long: Large ribosomal subunit protein uL13 (142 aa).

The protein belongs to the universal ribosomal protein uL13 family. Part of the 50S ribosomal subunit.

In terms of biological role, this protein is one of the early assembly proteins of the 50S ribosomal subunit, although it is not seen to bind rRNA by itself. It is important during the early stages of 50S assembly. The sequence is that of Large ribosomal subunit protein uL13 from Dechloromonas aromatica (strain RCB).